A 356-amino-acid chain; its full sequence is Alanine racemase (356 aa).

The active-site Proton acceptor; specific for D-alanine is Lys-34. Position 34 is an N6-(pyridoxal phosphate)lysine (Lys-34). Position 129 (Arg-129) interacts with substrate. Tyr-253 (proton acceptor; specific for L-alanine) is an active-site residue. Substrate is bound at residue Met-301.

The protein belongs to the alanine racemase family. Pyridoxal 5'-phosphate serves as cofactor.

The enzyme catalyses L-alanine = D-alanine. It functions in the pathway amino-acid biosynthesis; D-alanine biosynthesis; D-alanine from L-alanine: step 1/1. Catalyzes the interconversion of L-alanine and D-alanine. May also act on other amino acids. This Nitrosococcus oceani (strain ATCC 19707 / BCRC 17464 / JCM 30415 / NCIMB 11848 / C-107) protein is Alanine racemase (alr).